The following is a 335-amino-acid chain: Nucleoid-associated protein YejK (335 aa).

It belongs to the YejK family.

It localises to the cytoplasm. It is found in the nucleoid. The chain is Nucleoid-associated protein YejK from Shigella flexneri.